The primary structure comprises 276 residues: Rhomboid protease GlpG (276 aa).

A run of 6 helical transmembrane segments spans residues 94–114, 142–162, 169–189, 192–212, 229–249, and 250–270; these read GPFTLLLMAACILVFIIMNVV, ALMHFSVLHILFNLLWWWYLG, LGSGKLIVITIISALLSGYVQ, FSGPWFGGLSGVVYALMGYAW, LITFALLWLIAGWFDLFGMSI, and ANGAHVTGLAVGLAMAFADTL. The active-site Nucleophile is the S201. The active site involves H254.

This sequence belongs to the peptidase S54 family.

Its subcellular location is the cell inner membrane. It catalyses the reaction Cleaves type-1 transmembrane domains using a catalytic dyad composed of serine and histidine that are contributed by different transmembrane domains.. Rhomboid-type serine protease that catalyzes intramembrane proteolysis. The protein is Rhomboid protease GlpG of Enterobacter sp. (strain 638).